A 582-amino-acid chain; its full sequence is SHC-transforming protein 2 (582 aa).

2 disordered regions span residues 1 to 24 (MTQG…APTT) and 47 to 70 (GPAA…AGPG). Residues 8–20 (RAPPAPPAPPEPE) show a composition bias toward pro residues. The 183-residue stretch at 147–329 (LGPGVSYVVR…AGPEESAWGD (183 aa)) folds into the PID domain. The tract at residues 330–486 (EEDSLEHNYY…PTEEQLRQEP (157 aa)) is CH1. Phosphotyrosine occurs at positions 338, 339, and 414. The tract at residues 460-481 (PLEDQWPSPPTRRAPVAPTEEQ) is disordered. The 92-residue stretch at 487 to 578 (WYHGRMSRRA…ESELHLRGVV (92 aa)) folds into the SH2 domain.

As to quaternary structure, interacts with the Trk receptors in a phosphotyrosine-dependent manner and MEGF12. Once activated, binds to GRB2. In terms of processing, phosphorylated on tyrosines by the Trk receptors. In terms of tissue distribution, expressed in brain. Expressed at high level in the hypothalamus and at low level in the caudate nucleus.

Functionally, signaling adapter that couples activated growth factor receptors to signaling pathway in neurons. Involved in the signal transduction pathways of neurotrophin-activated Trk receptors in cortical neurons. This chain is SHC-transforming protein 2 (SHC2), found in Homo sapiens (Human).